A 384-amino-acid polypeptide reads, in one-letter code: Dual-specificity RNA methyltransferase RlmN (384 aa).

Glutamate 105 functions as the Proton acceptor in the catalytic mechanism. The region spanning 111 to 350 (EDDRATLCVS…TIVRKTRGDD (240 aa)) is the Radical SAM core domain. Cysteine 118 and cysteine 355 are disulfide-bonded. Residues cysteine 125, cysteine 129, and cysteine 132 each contribute to the [4Fe-4S] cluster site. Residues 179–180 (GE), serine 211, 233–235 (SLH), and asparagine 312 each bind S-adenosyl-L-methionine. Cysteine 355 (S-methylcysteine intermediate) is an active-site residue.

This sequence belongs to the radical SAM superfamily. RlmN family. It depends on [4Fe-4S] cluster as a cofactor.

The protein localises to the cytoplasm. The catalysed reaction is adenosine(2503) in 23S rRNA + 2 reduced [2Fe-2S]-[ferredoxin] + 2 S-adenosyl-L-methionine = 2-methyladenosine(2503) in 23S rRNA + 5'-deoxyadenosine + L-methionine + 2 oxidized [2Fe-2S]-[ferredoxin] + S-adenosyl-L-homocysteine. The enzyme catalyses adenosine(37) in tRNA + 2 reduced [2Fe-2S]-[ferredoxin] + 2 S-adenosyl-L-methionine = 2-methyladenosine(37) in tRNA + 5'-deoxyadenosine + L-methionine + 2 oxidized [2Fe-2S]-[ferredoxin] + S-adenosyl-L-homocysteine. Its function is as follows. Specifically methylates position 2 of adenine 2503 in 23S rRNA and position 2 of adenine 37 in tRNAs. m2A2503 modification seems to play a crucial role in the proofreading step occurring at the peptidyl transferase center and thus would serve to optimize ribosomal fidelity. The polypeptide is Dual-specificity RNA methyltransferase RlmN (Escherichia fergusonii (strain ATCC 35469 / DSM 13698 / CCUG 18766 / IAM 14443 / JCM 21226 / LMG 7866 / NBRC 102419 / NCTC 12128 / CDC 0568-73)).